Here is a 262-residue protein sequence, read N- to C-terminus: Glycoprotein gp2 (262 aa).

Residues 1 to 45 (RRGSPQGGSHTTPHPDRLTPSPDDTYDDDTNHPNGRNNSIEIVPQ) are disordered.

Its subcellular location is the virion membrane. Functionally, virulence factor. This is Glycoprotein gp2 from Equus caballus (Horse).